We begin with the raw amino-acid sequence, 206 residues long: Ribosomal RNA small subunit methyltransferase G (206 aa).

S-adenosyl-L-methionine is bound by residues Gly73, Leu78, 124–125, and Arg139; that span reads VE.

It belongs to the methyltransferase superfamily. RNA methyltransferase RsmG family.

It is found in the cytoplasm. It carries out the reaction guanosine(527) in 16S rRNA + S-adenosyl-L-methionine = N(7)-methylguanosine(527) in 16S rRNA + S-adenosyl-L-homocysteine. Functionally, specifically methylates the N7 position of guanine in position 527 of 16S rRNA. This is Ribosomal RNA small subunit methyltransferase G from Yersinia enterocolitica serotype O:8 / biotype 1B (strain NCTC 13174 / 8081).